A 556-amino-acid polypeptide reads, in one-letter code: WD repeat-containing protein srw1 (556 aa).

Residues M1–R80 are disordered. Over residues S12–S37 the composition is skewed to low complexity. A compositionally biased stretch (basic and acidic residues) spans S43–F55. S62 is subject to Phosphoserine. Basic and acidic residues predominate over residues R69–P78. T98 is modified (phosphothreonine). Residues T126–T146 are compositionally biased toward polar residues. The interval T126–N173 is disordered. The segment covering T159 to S169 has biased composition (low complexity). T177 carries the phosphothreonine modification. Residues S187 and S214 each carry the phosphoserine modification. 7 WD repeats span residues G246 to M285, Y289 to T328, G331 to R368, A372 to S411, N414 to N456, D458 to T499, and G502 to S541.

This sequence belongs to the WD repeat CDC20/Fizzy family. Post-translationally, phosphorylated by cdc2-cdc13-CDK complex. This targets srw1 for proteolysis which in turn promotes cdc13 turnover. Dephosphorylated during G1 arrest.

The protein localises to the nucleus. Functionally, has a role in cell differentiation and cell cycling by negatively regulating cig2 and cdc12-associated cdc2. Down-regulates the level of cdc13, particularly in a nitrogen deprived environment. Regulator of cell cycle G1 phase progression. Prevents onset of mitosis during the pre-Start G1 period. Required for degradation of cdc13 mitotic cyclin B during G1 arrest but not during mitotic exit. In Schizosaccharomyces pombe (strain 972 / ATCC 24843) (Fission yeast), this protein is WD repeat-containing protein srw1 (srw1).